The chain runs to 270 residues: Putative pyruvate, phosphate dikinase regulatory protein (270 aa).

ADP is bound at residue 148-155; it reads GISRTSKT.

This sequence belongs to the pyruvate, phosphate/water dikinase regulatory protein family. PDRP subfamily.

It carries out the reaction N(tele)-phospho-L-histidyl/L-threonyl-[pyruvate, phosphate dikinase] + ADP = N(tele)-phospho-L-histidyl/O-phospho-L-threonyl-[pyruvate, phosphate dikinase] + AMP + H(+). It catalyses the reaction N(tele)-phospho-L-histidyl/O-phospho-L-threonyl-[pyruvate, phosphate dikinase] + phosphate + H(+) = N(tele)-phospho-L-histidyl/L-threonyl-[pyruvate, phosphate dikinase] + diphosphate. Its function is as follows. Bifunctional serine/threonine kinase and phosphorylase involved in the regulation of the pyruvate, phosphate dikinase (PPDK) by catalyzing its phosphorylation/dephosphorylation. This is Putative pyruvate, phosphate dikinase regulatory protein from Bacillus mycoides (strain KBAB4) (Bacillus weihenstephanensis).